The chain runs to 397 residues: Glycine betaine/carnitine transport ATP-binding protein GbuA (397 aa).

Residues 28 to 264 enclose the ABC transporter domain; sequence KSKTDILKET…PANEYVEKFI (237 aa). 60–67 contacts ATP; the sequence is GLSGSGKS. CBS domains follow at residues 279 to 335 and 340 to 395; these read MIRP…NITS and LHRD…EVNV.

The protein belongs to the ABC transporter superfamily. The complex is composed of two ATP-binding proteins (GbuA), two transmembrane proteins (GbuB) and a solute-binding protein (GbuC).

It carries out the reaction a quaternary ammonium(out) + ATP + H2O = a quaternary ammonium(in) + ADP + phosphate + H(+). Its activity is regulated as follows. The complex is activated by an osmotic gradient or by low temperature. Its function is as follows. Part of the ABC transporter complex GbuABC involved in glycine betaine uptake. Responsible for energy coupling to the transport system. Involved, with BetL and OpuC, in osmoprotection and cryoprotection of Listeria. Can also uptake carnitine when carnitine is abundant in the growth medium. This is Glycine betaine/carnitine transport ATP-binding protein GbuA (gbuA) from Listeria monocytogenes serotype 1/2a (strain 10403S).